Here is an 89-residue protein sequence, read N- to C-terminus: Small ribosomal subunit protein uS15 (89 aa).

The protein belongs to the universal ribosomal protein uS15 family. As to quaternary structure, part of the 30S ribosomal subunit. Forms a bridge to the 50S subunit in the 70S ribosome, contacting the 23S rRNA.

Functionally, one of the primary rRNA binding proteins, it binds directly to 16S rRNA where it helps nucleate assembly of the platform of the 30S subunit by binding and bridging several RNA helices of the 16S rRNA. Its function is as follows. Forms an intersubunit bridge (bridge B4) with the 23S rRNA of the 50S subunit in the ribosome. This chain is Small ribosomal subunit protein uS15, found in Bifidobacterium adolescentis (strain ATCC 15703 / DSM 20083 / NCTC 11814 / E194a).